The following is a 429-amino-acid chain: Ribosomal RNA small subunit methyltransferase B (429 aa).

Residues 254-260 (CAAPGGK), aspartate 277, aspartate 303, and aspartate 322 contribute to the S-adenosyl-L-methionine site. The active-site Nucleophile is cysteine 375.

This sequence belongs to the class I-like SAM-binding methyltransferase superfamily. RsmB/NOP family.

It is found in the cytoplasm. It catalyses the reaction cytidine(967) in 16S rRNA + S-adenosyl-L-methionine = 5-methylcytidine(967) in 16S rRNA + S-adenosyl-L-homocysteine + H(+). Its function is as follows. Specifically methylates the cytosine at position 967 (m5C967) of 16S rRNA. In Salmonella arizonae (strain ATCC BAA-731 / CDC346-86 / RSK2980), this protein is Ribosomal RNA small subunit methyltransferase B.